Here is a 475-residue protein sequence, read N- to C-terminus: Ribulose bisphosphate carboxylase large chain (475 aa).

Positions 1–2 (MS) are excised as a propeptide. Position 3 is an N-acetylproline (Pro-3). Lys-14 is subject to N6,N6,N6-trimethyllysine. Substrate-binding residues include Asn-123 and Thr-173. Catalysis depends on Lys-175, which acts as the Proton acceptor. Lys-177 serves as a coordination point for substrate. Residues Lys-201, Asp-203, and Glu-204 each contribute to the Mg(2+) site. N6-carboxylysine is present on Lys-201. The active-site Proton acceptor is the His-294. Substrate is bound by residues Arg-295, His-327, and Ser-379.

Belongs to the RuBisCO large chain family. Type I subfamily. As to quaternary structure, heterohexadecamer of 8 large chains and 8 small chains; disulfide-linked. The disulfide link is formed within the large subunit homodimers. Mg(2+) serves as cofactor. Post-translationally, the disulfide bond which can form in the large chain dimeric partners within the hexadecamer appears to be associated with oxidative stress and protein turnover.

The protein resides in the plastid. Its subcellular location is the chloroplast. The enzyme catalyses 2 (2R)-3-phosphoglycerate + 2 H(+) = D-ribulose 1,5-bisphosphate + CO2 + H2O. It catalyses the reaction D-ribulose 1,5-bisphosphate + O2 = 2-phosphoglycolate + (2R)-3-phosphoglycerate + 2 H(+). Its function is as follows. RuBisCO catalyzes two reactions: the carboxylation of D-ribulose 1,5-bisphosphate, the primary event in carbon dioxide fixation, as well as the oxidative fragmentation of the pentose substrate in the photorespiration process. Both reactions occur simultaneously and in competition at the same active site. The sequence is that of Ribulose bisphosphate carboxylase large chain from Cerastium glomeratum (Sticky chickweed).